Reading from the N-terminus, the 179-residue chain is Peptide deformylase 2 (179 aa).

Fe cation is bound by residues Cys-104 and His-146. Glu-147 is a catalytic residue. His-150 is a binding site for Fe cation.

This sequence belongs to the polypeptide deformylase family. It depends on Fe(2+) as a cofactor.

The enzyme catalyses N-terminal N-formyl-L-methionyl-[peptide] + H2O = N-terminal L-methionyl-[peptide] + formate. Functionally, removes the formyl group from the N-terminal Met of newly synthesized proteins. Requires at least a dipeptide for an efficient rate of reaction. N-terminal L-methionine is a prerequisite for activity but the enzyme has broad specificity at other positions. The polypeptide is Peptide deformylase 2 (Streptomyces coelicolor (strain ATCC BAA-471 / A3(2) / M145)).